A 294-amino-acid chain; its full sequence is N-acetylmuramic acid 6-phosphate etherase (294 aa).

Residues 56-219 (TSYSLRNGGR…STLSMVSVGK (164 aa)) enclose the SIS domain. Residue glutamate 84 is the Proton donor of the active site. Residue glutamate 115 is part of the active site.

Belongs to the GCKR-like family. MurNAc-6-P etherase subfamily. As to quaternary structure, homodimer.

The enzyme catalyses N-acetyl-D-muramate 6-phosphate + H2O = N-acetyl-D-glucosamine 6-phosphate + (R)-lactate. The protein operates within amino-sugar metabolism; 1,6-anhydro-N-acetylmuramate degradation. Its pathway is amino-sugar metabolism; N-acetylmuramate degradation. It functions in the pathway cell wall biogenesis; peptidoglycan recycling. Its function is as follows. Specifically catalyzes the cleavage of the D-lactyl ether substituent of MurNAc 6-phosphate, producing GlcNAc 6-phosphate and D-lactate. Together with AnmK, is also required for the utilization of anhydro-N-acetylmuramic acid (anhMurNAc) either imported from the medium or derived from its own cell wall murein, and thus plays a role in cell wall recycling. The chain is N-acetylmuramic acid 6-phosphate etherase from Francisella tularensis subsp. holarctica (strain LVS).